The primary structure comprises 180 residues: Cytidylate kinase (180 aa).

7–15 (GPPGSGKST) contributes to the ATP binding site.

This sequence belongs to the cytidylate kinase family. Type 2 subfamily.

It localises to the cytoplasm. The catalysed reaction is CMP + ATP = CDP + ADP. It carries out the reaction dCMP + ATP = dCDP + ADP. This is Cytidylate kinase from Sulfurisphaera tokodaii (strain DSM 16993 / JCM 10545 / NBRC 100140 / 7) (Sulfolobus tokodaii).